Reading from the N-terminus, the 259-residue chain is 7-cyano-7-deazaguanine synthase (259 aa).

Residue L32–L42 coordinates ATP. 4 residues coordinate Zn(2+): C223, C233, C236, and C239.

Belongs to the QueC family. Zn(2+) serves as cofactor.

The catalysed reaction is 7-carboxy-7-deazaguanine + NH4(+) + ATP = 7-cyano-7-deazaguanine + ADP + phosphate + H2O + H(+). The protein operates within purine metabolism; 7-cyano-7-deazaguanine biosynthesis. Functionally, catalyzes the ATP-dependent conversion of 7-carboxy-7-deazaguanine (CDG) to 7-cyano-7-deazaguanine (preQ(0)). This chain is 7-cyano-7-deazaguanine synthase, found in Psychrobacter arcticus (strain DSM 17307 / VKM B-2377 / 273-4).